Reading from the N-terminus, the 366-residue chain is Aminomethyltransferase (366 aa).

This sequence belongs to the GcvT family. As to quaternary structure, the glycine cleavage system is composed of four proteins: P, T, L and H.

It carries out the reaction N(6)-[(R)-S(8)-aminomethyldihydrolipoyl]-L-lysyl-[protein] + (6S)-5,6,7,8-tetrahydrofolate = N(6)-[(R)-dihydrolipoyl]-L-lysyl-[protein] + (6R)-5,10-methylene-5,6,7,8-tetrahydrofolate + NH4(+). Functionally, the glycine cleavage system catalyzes the degradation of glycine. This Sodalis glossinidius (strain morsitans) protein is Aminomethyltransferase.